A 306-amino-acid polypeptide reads, in one-letter code: Aspartate carbamoyltransferase catalytic subunit (306 aa).

Carbamoyl phosphate contacts are provided by Arg55 and Thr56. Residue Lys84 participates in L-aspartate binding. Residues Arg105, His133, and Gln136 each contribute to the carbamoyl phosphate site. L-aspartate contacts are provided by Arg166 and Arg227. Residues Leu265 and Pro266 each coordinate carbamoyl phosphate.

It belongs to the aspartate/ornithine carbamoyltransferase superfamily. ATCase family. As to quaternary structure, heterododecamer (2C3:3R2) of six catalytic PyrB chains organized as two trimers (C3), and six regulatory PyrI chains organized as three dimers (R2).

It carries out the reaction carbamoyl phosphate + L-aspartate = N-carbamoyl-L-aspartate + phosphate + H(+). Its pathway is pyrimidine metabolism; UMP biosynthesis via de novo pathway; (S)-dihydroorotate from bicarbonate: step 2/3. In terms of biological role, catalyzes the condensation of carbamoyl phosphate and aspartate to form carbamoyl aspartate and inorganic phosphate, the committed step in the de novo pyrimidine nucleotide biosynthesis pathway. In Aeromonas hydrophila subsp. hydrophila (strain ATCC 7966 / DSM 30187 / BCRC 13018 / CCUG 14551 / JCM 1027 / KCTC 2358 / NCIMB 9240 / NCTC 8049), this protein is Aspartate carbamoyltransferase catalytic subunit.